Reading from the N-terminus, the 693-residue chain is F-box protein MAX2 (693 aa).

Residues 3-50 enclose the F-box domain; that stretch reads STTLSDLPDVILSTISSLVSDSRARNSLSLVSHKFLALERSTRSHLTI. LRR repeat units follow at residues 9–34, 49–74, 75–100, 110–135, 141–167, 168–196, 200–225, 232–257, 274–299, 302–327, 332–356, 357–382, 383–409, and 410–436; these read LPDVILSTISSLVSDSRARNSLSLVS, TIRGNARDLSLVPDCFRSISHLDLSF, LSPWGHTLLASLPIDHQNLLALRLKF, VYTRSPSSLELLLPQWPRIRHIKLLR, SQIPTGGDFVPIFEHCGGFLESLDLSN, FYHWTEDLPPVLLRYADVAARLTRLDLLT, TEGYKSSEIVSITKSCPNLKTFRVAC, FEFVGDETLSAVATSSPKLTLLHMVD, DSAVTAGTLIEVFSGLPNLEELVLDV, DVKHSGVALEALNSKCKKLRVLKLGQ, CSATEWRRLDGVALCGGLQSLSIKN, SGDLTDMGLVAIGRGCCKLTTFEIQG, CENVTVDGLRTMVSLRSKTLTDVRISC, and CKNLDTAASLKAIEPICDRIKRLHIDC. Residues 445–465 are disordered; the sequence is EVEGRVETSEADHEEEDDGYE. LRR repeat units lie at residues 480 to 505, 508 to 532, 541 to 565, and 608 to 637; these read CSTSDVNGFCSEDRVWEKLEYLSLWI, GEFLTPLPMTGLDDCPNLEEIRIKI, RPAEPEFGLSCLALYPKLSKMQLDC, and DRDVNQRSLSLPGAGLLQECLTLRKLFIHG.

Part of a SCF (SKP1-cullin-F-box) protein ligase complex. Interacts with SKP1A/ASK1. Interacts with CUL1. Interacts with SMXL6, SMXL7 and SMXL8. Interacts with D14. Forms a complex with D14 and SKP1A/ASK1 in presence of strigolactone. As to expression, expressed in the vasculature of growing leaves and roots, rosette axillary bud, flowers, siliques, funiculi and stems.

The protein localises to the nucleus. The protein operates within protein modification; protein ubiquitination. In terms of biological role, component of SCF(ASK-cullin-F-box) E3 ubiquitin ligase complexes, which may mediate the ubiquitination and subsequent proteasomal degradation of target proteins. Promotes the senescence. Is necessary for responses to strigolactones and karrikins. Contributes to the selective repression of axillary shoots and moderates the branching by regulating negatively the auxin transport in primary stems, in an AXR1-independent manner. Required for the progression of leaf senescence mediated by methyl jasmonate. Required at each node to suppress axillary bud growth. In Arabidopsis thaliana (Mouse-ear cress), this protein is F-box protein MAX2.